Here is a 310-residue protein sequence, read N- to C-terminus: Thioredoxin reductase (310 aa).

An FAD-binding site is contributed by 34–41 (NGIQPGGQ). Cys135 and Cys138 form a disulfide bridge. 281 to 290 (DVQDKIYRQA) serves as a coordination point for FAD.

This sequence belongs to the class-II pyridine nucleotide-disulfide oxidoreductase family. As to quaternary structure, homodimer. It depends on FAD as a cofactor.

The protein resides in the cytoplasm. The catalysed reaction is [thioredoxin]-dithiol + NADP(+) = [thioredoxin]-disulfide + NADPH + H(+). The sequence is that of Thioredoxin reductase (trxB) from Rickettsia bellii (strain RML369-C).